The primary structure comprises 41 residues: Photosystem II reaction center protein L (41 aa).

A helical membrane pass occupies residues serine 20–leucine 40.

The protein belongs to the PsbL family. PSII is composed of 1 copy each of membrane proteins PsbA, PsbB, PsbC, PsbD, PsbE, PsbF, PsbH, PsbI, PsbJ, PsbK, PsbL, PsbM, PsbT, PsbX, PsbY, PsbZ, Psb30/Ycf12, peripheral proteins PsbO, CyanoQ (PsbQ), PsbU, PsbV and a large number of cofactors. It forms dimeric complexes.

The protein resides in the cellular thylakoid membrane. Its function is as follows. One of the components of the core complex of photosystem II (PSII). PSII is a light-driven water:plastoquinone oxidoreductase that uses light energy to abstract electrons from H(2)O, generating O(2) and a proton gradient subsequently used for ATP formation. It consists of a core antenna complex that captures photons, and an electron transfer chain that converts photonic excitation into a charge separation. This subunit is found at the monomer-monomer interface and is required for correct PSII assembly and/or dimerization. In Synechococcus sp. (strain JA-2-3B'a(2-13)) (Cyanobacteria bacterium Yellowstone B-Prime), this protein is Photosystem II reaction center protein L.